A 275-amino-acid polypeptide reads, in one-letter code: MTSDLDTRLDLLRNITSKVGAFALARFGNLSHIVIETKGEADYVSAADRDAESLARRLIHAQFPADAIVGEEQLGDAEVDHWLIDPIDGTANFLSGIPLWAVSIAFVRNKEPVLGAVALPALDTLLWASVDGPLHGTGSVSPLVGAQPIAFGIGRNRTWPLAHRLEVEAAFEARGYHIVCLGSCAAALAMVAAGRLAGYVEHGTHLWDCAAGHVLCRAAGAPSSILFEADGKVAIIAAPQHLRVTAKADARSLSEKHIFDPGSDRISHRMESSAD.

The Mg(2+) site is built by glutamate 71, aspartate 85, isoleucine 87, and aspartate 88. Glutamate 71 provides a ligand contact to substrate. 87–90 (IDGT) contributes to the substrate binding site. 3 helical membrane passes run 87–107 (IDGT…IAFV), 112–132 (PVLG…SVDG), and 178–198 (IVCL…RLAG). Position 208 (aspartate 208) interacts with Mg(2+). Substrate is bound at residue aspartate 208.

It belongs to the inositol monophosphatase superfamily.

It localises to the cell membrane. This is an uncharacterized protein from Sinorhizobium fredii (strain NBRC 101917 / NGR234).